Consider the following 336-residue polypeptide: Biotin synthase (336 aa).

A Radical SAM core domain is found at 36 to 263 (TKVQISTLLS…ESHVRLAAGR (228 aa)). Positions 51, 55, and 58 each coordinate [4Fe-4S] cluster. Cysteine 95, cysteine 126, cysteine 186, and arginine 258 together coordinate [2Fe-2S] cluster.

This sequence belongs to the radical SAM superfamily. Biotin synthase family. In terms of assembly, homodimer. [4Fe-4S] cluster is required as a cofactor. The cofactor is [2Fe-2S] cluster.

It catalyses the reaction (4R,5S)-dethiobiotin + (sulfur carrier)-SH + 2 reduced [2Fe-2S]-[ferredoxin] + 2 S-adenosyl-L-methionine = (sulfur carrier)-H + biotin + 2 5'-deoxyadenosine + 2 L-methionine + 2 oxidized [2Fe-2S]-[ferredoxin]. The protein operates within cofactor biosynthesis; biotin biosynthesis; biotin from 7,8-diaminononanoate: step 2/2. In terms of biological role, catalyzes the conversion of dethiobiotin (DTB) to biotin by the insertion of a sulfur atom into dethiobiotin via a radical-based mechanism. This Gluconobacter oxydans (strain 621H) (Gluconobacter suboxydans) protein is Biotin synthase.